A 310-amino-acid polypeptide reads, in one-letter code: tRNA-cytidine(32) 2-sulfurtransferase (310 aa).

A PP-loop motif motif is present at residues 45–50 (SGGKDS). [4Fe-4S] cluster-binding residues include Cys120, Cys123, and Cys211.

This sequence belongs to the TtcA family. Homodimer. Mg(2+) is required as a cofactor. The cofactor is [4Fe-4S] cluster.

It is found in the cytoplasm. The enzyme catalyses cytidine(32) in tRNA + S-sulfanyl-L-cysteinyl-[cysteine desulfurase] + AH2 + ATP = 2-thiocytidine(32) in tRNA + L-cysteinyl-[cysteine desulfurase] + A + AMP + diphosphate + H(+). The protein operates within tRNA modification. In terms of biological role, catalyzes the ATP-dependent 2-thiolation of cytidine in position 32 of tRNA, to form 2-thiocytidine (s(2)C32). The sulfur atoms are provided by the cysteine/cysteine desulfurase (IscS) system. The protein is tRNA-cytidine(32) 2-sulfurtransferase of Shewanella baltica (strain OS155 / ATCC BAA-1091).